The primary structure comprises 290 residues: 4-hydroxybenzoate octaprenyltransferase (290 aa).

A run of 6 helical transmembrane segments spans residues 41-61 (WPLL…GCAM), 89-109 (WEAV…IQPL), 133-153 (FFAI…PMAF), 158-178 (DTVP…SVAY), 202-224 (FGRF…YVWI), and 269-289 (WLGG…GTAG).

Belongs to the UbiA prenyltransferase family. Mg(2+) serves as cofactor.

It is found in the cell inner membrane. The catalysed reaction is all-trans-octaprenyl diphosphate + 4-hydroxybenzoate = 4-hydroxy-3-(all-trans-octaprenyl)benzoate + diphosphate. It functions in the pathway cofactor biosynthesis; ubiquinone biosynthesis. Functionally, catalyzes the prenylation of para-hydroxybenzoate (PHB) with an all-trans polyprenyl group. Mediates the second step in the final reaction sequence of ubiquinone-8 (UQ-8) biosynthesis, which is the condensation of the polyisoprenoid side chain with PHB, generating the first membrane-bound Q intermediate 3-octaprenyl-4-hydroxybenzoate. The polypeptide is 4-hydroxybenzoate octaprenyltransferase (Burkholderia ambifaria (strain MC40-6)).